The sequence spans 167 residues: uncharacterized protein (167 aa).

It localises to the mitochondrion. This is an uncharacterized protein from Marchantia polymorpha (Common liverwort).